Consider the following 396-residue polypeptide: NADH-quinone oxidoreductase subunit D (396 aa).

This sequence belongs to the complex I 49 kDa subunit family. As to quaternary structure, NDH-1 is composed of 14 different subunits. Subunits NuoB, C, D, E, F, and G constitute the peripheral sector of the complex.

The protein localises to the cell inner membrane. The catalysed reaction is a quinone + NADH + 5 H(+)(in) = a quinol + NAD(+) + 4 H(+)(out). Its function is as follows. NDH-1 shuttles electrons from NADH, via FMN and iron-sulfur (Fe-S) centers, to quinones in the respiratory chain. The immediate electron acceptor for the enzyme in this species is believed to be ubiquinone. Couples the redox reaction to proton translocation (for every two electrons transferred, four hydrogen ions are translocated across the cytoplasmic membrane), and thus conserves the redox energy in a proton gradient. The chain is NADH-quinone oxidoreductase subunit D from Brucella canis (strain ATCC 23365 / NCTC 10854 / RM-666).